The chain runs to 131 residues: Protein SOB FIVE-LIKE 4 (131 aa).

Disordered stretches follow at residues 1 to 21 (MDKEECSSSESGWTTYLSSPI) and 40 to 131 (IYNY…YRMK). The span at 8–18 (SSESGWTTYLS) shows a compositional bias: polar residues. Residues 11-16 (SGWTTY) carry the SOFL-A motif. Basic and acidic residues predominate over residues 46–58 (KVEHEEERNKDSD). Positions 60 to 69 (SMASDASSGP) match the SOFL-B motif. Residues 79–109 (KALDLKNGKNEGNSKSKNDDDHHNHYHDGKK) show a composition bias toward basic and acidic residues. The Nuclear localization signal motif lies at 107-114 (GKKTSNSY). The span at 114–131 (YRKKDKKKRENKSTYRMK) shows a compositional bias: basic residues.

It belongs to the SOFL plant protein family. Expressed, at low levels, in seedlings, roots, flowers and siliques.

It is found in the cytoplasm. It localises to the nucleus. Involved in cytokinin-mediated development. This chain is Protein SOB FIVE-LIKE 4, found in Arabidopsis thaliana (Mouse-ear cress).